The sequence spans 754 residues: Protein neuralized (754 aa).

One can recognise an NHR 1 domain in the interval 106–260 (PLQFHSVHGD…NCTGIEFLDS (155 aa)). Residues 280–297 (QQQQMPQPAANASSALNS) show a composition bias toward low complexity. The interval 280 to 308 (QQQQMPQPAANASSALNSHHPHQQSRRSL) is disordered. A phosphoserine mark is found at Ser338 and Ser341. In terms of domain architecture, NHR 2 spans 368-523 (PVPFHNTKGR…STQSLRMFRQ (156 aa)). Residues 701-742 (CTICYENPIDSVLYMCGHMCMCYDCAIEQWRGVGGGQCPLCR) form an RING-type zinc finger.

It is found in the nucleus. Functionally, involved in neurogenesis. Interacts with other neurogenic proteins in the specification of the neuroblast versus epidermoblast cell fate. In Drosophila melanogaster (Fruit fly), this protein is Protein neuralized (neur).